We begin with the raw amino-acid sequence, 396 residues long: tRNA (guanine(9)-N1)-methyltransferase (396 aa).

2 stretches are compositionally biased toward basic and acidic residues: residues 1–18 and 52–73; these read MEDD…HDEV and DRID…HGKD. The segment at 1-109 is disordered; sequence MEDDDRPRKY…KVKRKEKLVA (109 aa). Residues 139–357 enclose the SAM-dependent MTase TRM10-type domain; sequence TQKKFQRSTL…QVIPQRKGGK (219 aa). S-adenosyl-L-methionine is bound by residues 264 to 265, Gly284, 288 to 292, Cys296, Leu310, and 322 to 324; these read LS, DKNRH, and QVL. The Proton acceptor role is filled by Asp288. Residues 354–396 are disordered; that stretch reads KGGKLKSADHESEDQTPRESVEAVEAEPDGEGAAAEAGEGGKE. The segment covering 359-374 has biased composition (basic and acidic residues); sequence KSADHESEDQTPRESV.

The protein belongs to the class IV-like SAM-binding methyltransferase superfamily. TRM10 family. In terms of assembly, monomer.

The protein resides in the cytoplasm. Its subcellular location is the nucleus. It catalyses the reaction guanosine(9) in tRNA + S-adenosyl-L-methionine = N(1)-methylguanosine(9) in tRNA + S-adenosyl-L-homocysteine + H(+). S-adenosyl-L-methionine-dependent guanine N(1)-methyltransferase that catalyzes the formation of N(1)-methylguanine at position 9 (m1G9) in cytoplasmic tRNA. This is tRNA (guanine(9)-N1)-methyltransferase from Aspergillus fumigatus (strain ATCC MYA-4609 / CBS 101355 / FGSC A1100 / Af293) (Neosartorya fumigata).